The sequence spans 561 residues: Endoplasmic reticulum oxidoreductin-1 (561 aa).

A signal peptide spans 1–18 (MVKVLQLCFLSAISLVQA). N-linked (GlcNAc...) asparagine glycans are attached at residues Asn-20 and Asn-39. Disulfide bonds link Cys-95/Cys-349, Cys-105/Cys-110, Cys-145/Cys-166, Cys-152/Cys-295, and Cys-352/Cys-355. The N-linked (GlcNAc...) asparagine glycan is linked to Asn-135. Residues Arg-187, Thr-189, Trp-200, Ser-228, His-231, and Arg-260 each contribute to the FAD site. Residue Asn-342 is glycosylated (N-linked (GlcNAc...) asparagine). Cys-352 acts as the Nucleophile in catalysis. Cys-355 is an active-site residue. Asn-452 carries an N-linked (GlcNAc...) asparagine glycan.

It belongs to the EROs family. As to quaternary structure, may function both as a monomer and a homodimer. FAD serves as cofactor.

Its subcellular location is the endoplasmic reticulum membrane. Its function is as follows. Essential oxidoreductase that oxidizes proteins in the endoplasmic reticulum to produce disulfide bonds. Acts by oxidizing directly PDI1 isomerase through a direct disulfide exchange. Does not act as a direct oxidant of folding substrate, but relies on PDI1 to transfer oxidizing equivalent. Does not oxidize all pdi related proteins, suggesting that it can discriminate between PDI1 and related proteins. Its reoxidation probably involves electron transfer to molecular oxygen via FAD. Acts independently of glutathione. May be responsible for a significant proportion of reactive oxygen species (ROS) in the cell, thereby being a source of oxidative stress. In Kluyveromyces lactis (strain ATCC 8585 / CBS 2359 / DSM 70799 / NBRC 1267 / NRRL Y-1140 / WM37) (Yeast), this protein is Endoplasmic reticulum oxidoreductin-1 (ERO1).